The chain runs to 193 residues: Ion-translocating oxidoreductase complex subunit A (193 aa).

The next 6 membrane-spanning stretches (helical) occupy residues 5–25, 47–67, 72–92, 102–122, 134–154, and 171–191; these read FFFI…FLGL, FVVV…LLPF, LRII…EIIL, ILGI…IPLF, ILYA…FSSI, and PIVL…KGLV.

It belongs to the NqrDE/RnfAE family. As to quaternary structure, the complex is composed of six subunits: RnfA, RnfB, RnfC, RnfD, RnfE and RnfG.

The protein resides in the cell inner membrane. Its function is as follows. Part of a membrane-bound complex that couples electron transfer with translocation of ions across the membrane. This Buchnera aphidicola subsp. Schizaphis graminum (strain Sg) protein is Ion-translocating oxidoreductase complex subunit A.